The primary structure comprises 313 residues: Ribonuclease HIII (313 aa).

Residues 63–85 (ARWGTAEPQEKKKTAKKPADPRY) form a disordered region. The span at 70-82 (PQEKKKTAKKPAD) shows a compositional bias: basic and acidic residues. Residues 94–310 (MSVIGSDEVG…TQKAQRLADK (217 aa)) form the RNase H type-2 domain. A divalent metal cation-binding residues include Asp-100, Glu-101, and Asp-205.

Belongs to the RNase HII family. RnhC subfamily. In terms of assembly, interacts with the RNA polymerase core. Mn(2+) is required as a cofactor. Requires Mg(2+) as cofactor.

It is found in the cytoplasm. It carries out the reaction Endonucleolytic cleavage to 5'-phosphomonoester.. Endonuclease that specifically degrades the RNA of RNA-DNA hybrids. This is Ribonuclease HIII (rnhC) from Bacillus subtilis (strain 168).